Consider the following 179-residue polypeptide: Coiled-coil domain-containing protein 32 (179 aa).

A coiled-coil region spans residues 75-98 (EVYLASLEKKLRRIKGLNEEVTSK). Residues 157–179 (FLIPPESQAEKPEARDEPAAAEQ) form a disordered region. The span at 164 to 179 (QAEKPEARDEPAAAEQ) shows a compositional bias: basic and acidic residues.

In terms of assembly, interacts with AP2S1; the interaction is direct and mediates association with adaptor protein complex 2 (AP-2).

The protein localises to the membrane. The protein resides in the coated pit. In terms of biological role, regulates clathrin-mediated endocytsois of cargos such as transferrin probably through the association and modulation of adaptor protein complex 2 (AP-2). Has a role in ciliogenesis. Required for proper cephalic and left/right axis development. The polypeptide is Coiled-coil domain-containing protein 32 (Ccdc32) (Rattus norvegicus (Rat)).